A 147-amino-acid chain; its full sequence is Large ribosomal subunit protein uL15 (147 aa).

Residues 1-13 (MELHSLKAAEGSR) are compositionally biased toward basic and acidic residues. The interval 1–57 (MELHSLKAAEGSRKVRNRVGRGTSSGNGKTSGRGQKGQKSRSGGGVRPGFEGGQTEL) is disordered. 2 stretches are compositionally biased toward gly residues: residues 23 to 35 (TSSGNGKTSGRGQ) and 42 to 52 (SGGGVRPGFEG).

Belongs to the universal ribosomal protein uL15 family. Part of the 50S ribosomal subunit.

In terms of biological role, binds to the 23S rRNA. This chain is Large ribosomal subunit protein uL15, found in Lactococcus lactis subsp. cremoris (strain MG1363).